A 382-amino-acid polypeptide reads, in one-letter code: 3-dehydroquinate synthase (382 aa).

Residues Glu-81–Lys-86, Gly-115–Asp-119, Thr-139–Ser-140, Lys-152, and Lys-161 contribute to the NAD(+) site. Zn(2+) is bound by residues Glu-194, His-256, and His-274.

Belongs to the sugar phosphate cyclases superfamily. Dehydroquinate synthase family. The cofactor is NAD(+). Co(2+) serves as cofactor. Zn(2+) is required as a cofactor.

It localises to the cytoplasm. It catalyses the reaction 7-phospho-2-dehydro-3-deoxy-D-arabino-heptonate = 3-dehydroquinate + phosphate. Its pathway is metabolic intermediate biosynthesis; chorismate biosynthesis; chorismate from D-erythrose 4-phosphate and phosphoenolpyruvate: step 2/7. In terms of biological role, catalyzes the conversion of 3-deoxy-D-arabino-heptulosonate 7-phosphate (DAHP) to dehydroquinate (DHQ). The polypeptide is 3-dehydroquinate synthase (Bradyrhizobium diazoefficiens (strain JCM 10833 / BCRC 13528 / IAM 13628 / NBRC 14792 / USDA 110)).